A 152-amino-acid polypeptide reads, in one-letter code: Regulatory protein RecX (152 aa).

The protein belongs to the RecX family.

It is found in the cytoplasm. In terms of biological role, modulates RecA activity. In Chromohalobacter salexigens (strain ATCC BAA-138 / DSM 3043 / CIP 106854 / NCIMB 13768 / 1H11), this protein is Regulatory protein RecX.